A 243-amino-acid chain; its full sequence is Triosephosphate isomerase (243 aa).

Asparagine 9–lysine 11 is a substrate binding site. The Electrophile role is filled by histidine 96. Residue glutamate 165 is the Proton acceptor of the active site. Residues glycine 171, serine 204, and glycine 225 to glycine 226 contribute to the substrate site.

The protein belongs to the triosephosphate isomerase family. In terms of assembly, homodimer.

Its subcellular location is the cytoplasm. It carries out the reaction D-glyceraldehyde 3-phosphate = dihydroxyacetone phosphate. Its pathway is carbohydrate biosynthesis; gluconeogenesis. It functions in the pathway carbohydrate degradation; glycolysis; D-glyceraldehyde 3-phosphate from glycerone phosphate: step 1/1. In terms of biological role, involved in the gluconeogenesis. Catalyzes stereospecifically the conversion of dihydroxyacetone phosphate (DHAP) to D-glyceraldehyde-3-phosphate (G3P). This Parasynechococcus marenigrum (strain WH8102) protein is Triosephosphate isomerase.